A 291-amino-acid chain; its full sequence is Pca regulon regulatory protein (291 aa).

Residues M1–A22 are disordered. An HTH iclR-type domain is found at M45 to P105. The H-T-H motif DNA-binding region spans I67–H86. The IclR-ED domain occupies L120–G291.

Functionally, positive regulator of all genes within the pca regulon, pcaBDC, pcaIJ and pcaF. Also required for the chemotactic response to aromatic compounds. The protein is Pca regulon regulatory protein (pcaR) of Pseudomonas putida (Arthrobacter siderocapsulatus).